We begin with the raw amino-acid sequence, 373 residues long: Queuine tRNA-ribosyltransferase (373 aa).

Aspartate 94 functions as the Proton acceptor in the catalytic mechanism. Substrate-binding positions include aspartate 94–phenylalanine 98, aspartate 148, glutamine 191, and glycine 218. The tract at residues glycine 249–tyrosine 255 is RNA binding. Aspartate 268 serves as the catalytic Nucleophile. The segment at threonine 273–arginine 277 is RNA binding; important for wobble base 34 recognition. Zn(2+)-binding residues include cysteine 306, cysteine 308, cysteine 311, and histidine 337.

It belongs to the queuine tRNA-ribosyltransferase family. Homodimer. Within each dimer, one monomer is responsible for RNA recognition and catalysis, while the other monomer binds to the replacement base PreQ1. The cofactor is Zn(2+).

The catalysed reaction is 7-aminomethyl-7-carbaguanine + guanosine(34) in tRNA = 7-aminomethyl-7-carbaguanosine(34) in tRNA + guanine. It participates in tRNA modification; tRNA-queuosine biosynthesis. Catalyzes the base-exchange of a guanine (G) residue with the queuine precursor 7-aminomethyl-7-deazaguanine (PreQ1) at position 34 (anticodon wobble position) in tRNAs with GU(N) anticodons (tRNA-Asp, -Asn, -His and -Tyr). Catalysis occurs through a double-displacement mechanism. The nucleophile active site attacks the C1' of nucleotide 34 to detach the guanine base from the RNA, forming a covalent enzyme-RNA intermediate. The proton acceptor active site deprotonates the incoming PreQ1, allowing a nucleophilic attack on the C1' of the ribose to form the product. After dissociation, two additional enzymatic reactions on the tRNA convert PreQ1 to queuine (Q), resulting in the hypermodified nucleoside queuosine (7-(((4,5-cis-dihydroxy-2-cyclopenten-1-yl)amino)methyl)-7-deazaguanosine). The protein is Queuine tRNA-ribosyltransferase of Ruminiclostridium cellulolyticum (strain ATCC 35319 / DSM 5812 / JCM 6584 / H10) (Clostridium cellulolyticum).